A 614-amino-acid chain; its full sequence is UvrABC system protein C (614 aa).

The region spanning 20–98 is the GIY-YIG domain; it reads TAPGVYRMYA…IKSLSPRYNV (79 aa). In terms of domain architecture, UVR spans 207 to 242; that stretch reads DELTRELGEQMQAASEALEFEQAARLRDLISSLRSM.

This sequence belongs to the UvrC family. In terms of assembly, interacts with UvrB in an incision complex.

Its subcellular location is the cytoplasm. The UvrABC repair system catalyzes the recognition and processing of DNA lesions. UvrC both incises the 5' and 3' sides of the lesion. The N-terminal half is responsible for the 3' incision and the C-terminal half is responsible for the 5' incision. This is UvrABC system protein C from Stenotrophomonas maltophilia (strain K279a).